Reading from the N-terminus, the 732-residue chain is Serine/threonine-protein kinase CBK1 (732 aa).

Residues 111-240 (SFDNHLNVDP…STEAANSDMT (130 aa)) are disordered. Over residues 119–159 (DPNNTERFTSMDSMNFQPPASTFTQLGNGSSTNLSEISSGQ) the composition is skewed to polar residues. Low complexity predominate over residues 160–171 (NSLLSNHSVNNL). The segment covering 172–183 (PTALTSDTSPPV) has biased composition (polar residues). Over residues 185 to 221 (QHPQFQPQQQQQQQQPQQQQIFQQQQQQQQQQQQPQQ) the composition is skewed to low complexity. Positions 222–240 (SRAVVNQSVSTEAANSDMT) are enriched in polar residues. Positions 281–310 (HAIERNQRRLELENKIANEDIGSSEERKNR) form a coiled coil. Positions 335 to 647 (FHTVKVIGKG…AEEIKQHPFF (313 aa)) constitute a Protein kinase domain. ATP is bound by residues 341 to 349 (IGKGAFGEV) and K364. The active-site Proton acceptor is D458. Residues 648 to 730 (RGVDWDSIRD…SRFDYLTRKN (83 aa)) enclose the AGC-kinase C-terminal domain.

The protein belongs to the protein kinase superfamily. STE Ser/Thr protein kinase family. COT1 subfamily. In terms of assembly, interacts with MOB2 and BCR1.

It localises to the bud neck. The protein localises to the cell tip. It carries out the reaction L-seryl-[protein] + ATP = O-phospho-L-seryl-[protein] + ADP + H(+). The enzyme catalyses L-threonyl-[protein] + ATP = O-phospho-L-threonyl-[protein] + ADP + H(+). In terms of biological role, serine/threonine-protein kinase required for wild-type hyphal growth and transcriptional regulation of cell-wall-associated genes. Involved in the biofilm formation through phosphorylation of the master regulator of biofilm formation BCR1. This Candida albicans (strain SC5314 / ATCC MYA-2876) (Yeast) protein is Serine/threonine-protein kinase CBK1 (CBK1).